Reading from the N-terminus, the 124-residue chain is Snake venom vascular endothelial growth factor toxin apiscin (124 aa).

The N-terminal stretch at 1–24 (MAAYLLAVAILFCIQGWPSGTVQG) is a signal peptide. Gln25 carries the post-translational modification Pyrrolidone carboxylic acid. Cystine bridges form between Cys38-Cys80, Cys69-Cys115, and Cys73-Cys117.

The protein belongs to the PDGF/VEGF growth factor family. Snake venom VEGF subfamily. Homodimer; disulfide-linked. Interacts with VEGF receptor-1 (FLT1) with a high affinity, whereas it binds to VEGF receptor-2 (KDR) with a low affinity. Does not bind VEGF receptor-3 (FLT4). In terms of tissue distribution, expressed by the venom gland.

The protein resides in the secreted. Snake venom VEGFs that may contribute to venom dispersion and prey subjugation by inducing vascular permeability and hypotension. This protein induces an increase in capillary permeability after intradermal injection, as well as a drastic hypotensive effect after intravenous injection. The hypotension is mediated by nitric oxide (NO), which is produced by VEGF-activated endothelium NO synthase. Also induces angiogenesis in vitro. Like other crotalid VEGFs, this protein interacts with VEGF receptor-1 (FLT1) with a high affinity, whereas it binds to VEGF receptor-2 (KDR) with a low affinity. This Agkistrodon piscivorus piscivorus (Eastern cottonmouth) protein is Snake venom vascular endothelial growth factor toxin apiscin.